A 127-amino-acid polypeptide reads, in one-letter code: Mediator of RNA polymerase II transcription subunit 9 (127 aa).

Residues 95–119 (QKEQEIEAKKRVHRQLRQRVEEIAG) are a coiled coil.

This sequence belongs to the Mediator complex subunit 9 family. As to quaternary structure, component of the Mediator complex.

The protein resides in the nucleus. In terms of biological role, component of the Mediator complex, a coactivator involved in the regulated transcription of nearly all RNA polymerase II-dependent genes. Mediator functions as a bridge to convey information from gene-specific regulatory proteins to the basal RNA polymerase II transcription machinery. Mediator is recruited to promoters by direct interactions with regulatory proteins and serves as a scaffold for the assembly of a functional preinitiation complex with RNA polymerase II and the general transcription factors. The polypeptide is Mediator of RNA polymerase II transcription subunit 9 (CSE2) (Eremothecium gossypii (strain ATCC 10895 / CBS 109.51 / FGSC 9923 / NRRL Y-1056) (Yeast)).